The chain runs to 653 residues: MACNLCYEAESPDEAALVYAARAYQCTLQSRTPEQVMVDFAASGPLTFQLLHILPFDSVRKRMSVVVRHPLSNQVVVYTKGADSVIMELLSVASPDGAGPEKQQMIIREKTQRHLDDYAKQGLRTLCIAKKVMSDTEYAEWLRNHFLAETSIDNREELLLESAMRLENKLTLLGATGIEDRLQEGVPESIEALHKAGIKIWMLTGDKQETAVNIAYACMLMSTILKELQKKTQALPEQVSLSVDLHQPPVPQDSGLRAGLIITGKTLEFALQESLQKQFLELTSWCQTVVCCRATPLQKSEVVKLVRSHLQVMTLAIGDGANDVSMIQVADIGIGVSGQEGMQAVMASDFAVSQFKHLSKLLLVHGHWCYTRLSNMILYFFYKNVAYVNLLFWYQFFCGFSGTSMTDYWVLIFFNLLFTSAPPVIYGVLEKDVSAETLMQLPELYKSGQKSEAYLPHTFWITLLDAFYQSLVCFFVPYFTYQGSDIDIFAFGNPLNTAALFIILLHLIIESKSLTWIHMLVITGSILSYFLFAIVFGAMCVTCNPPSNPYWIMQEHVLDPVFYLVCILTTCIALLPRFVYRGAGKMNQVTSNYANQSADKSGRRPKPGPSTVFAMKSATSCAIEQGNLSLCETALDQGYSETKAFEMARPCKD.

At 1–375 (MACNLCYEAE…GHWCYTRLSN (375 aa)) the chain is on the cytoplasmic side. ATP-binding positions include glutamate 14, phenylalanine 56, lysine 80, arginine 124, threonine 204, glycine 205, aspartate 206, 259 to 266 (GLIITGKT), arginine 293, and lysine 299. Position 319 (aspartate 319) interacts with Mg(2+). 2 residues coordinate ATP: asparagine 322 and aspartate 323. A Mg(2+)-binding site is contributed by aspartate 323. Residues 376 to 396 (MILYFFYKNVAYVNLLFWYQF) form a helical membrane-spanning segment. The Exoplasmic loop segment spans residues 397-407 (FCGFSGTSMTD). A helical transmembrane segment spans residues 408–428 (YWVLIFFNLLFTSAPPVIYGV). Residues 429-458 (LEKDVSAETLMQLPELYKSGQKSEAYLPHT) lie on the Cytoplasmic side of the membrane. The chain crosses the membrane as a helical span at residues 459 to 480 (FWITLLDAFYQSLVCFFVPYFT). Residues 481 to 487 (YQGSDID) lie on the Exoplasmic loop side of the membrane. A helical transmembrane segment spans residues 488–510 (IFAFGNPLNTAALFIILLHLIIE). At 511-516 (SKSLTW) the chain is on the cytoplasmic side. A helical membrane pass occupies residues 517–537 (IHMLVITGSILSYFLFAIVFG). Residues 538-555 (AMCVTCNPPSNPYWIMQE) are Exoplasmic loop-facing. The chain crosses the membrane as a helical span at residues 556–580 (HVLDPVFYLVCILTTCIALLPRFVY). At 581-653 (RGAGKMNQVT…AFEMARPCKD (73 aa)) the chain is on the cytoplasmic side.

This sequence belongs to the cation transport ATPase (P-type) (TC 3.A.3) family. Type IV subfamily. In terms of assembly, component of a P4-ATPase flippase complex which consists of a catalytic alpha subunit ATP10A and an accessory beta subunit TMEM30A. The cofactor is Mg(2+). Post-translationally, autophosphorylated at the conserved aspartate of the P-type ATPase signature sequence.

The protein resides in the cell membrane. Its subcellular location is the endoplasmic reticulum membrane. It catalyses the reaction ATP + H2O + phospholipidSide 1 = ADP + phosphate + phospholipidSide 2.. The enzyme catalyses a beta-D-glucosyl-(1&lt;-&gt;1')-N-acylsphing-4-enine(out) + ATP + H2O = a beta-D-glucosyl-(1&lt;-&gt;1')-N-acylsphing-4-enine(in) + ADP + phosphate + H(+). In terms of biological role, catalytic component of a P4-ATPase flippase complex, which catalyzes the hydrolysis of ATP coupled to the transport of glucosylceramide (GlcCer) from the outer to the inner leaflet of the plasma membrane. The protein is Phospholipid-transporting ATPase VD (ATP10D) of Macaca fascicularis (Crab-eating macaque).